The primary structure comprises 3165 residues: ORFB polyprotein (3165 aa).

The Peptidase C8 domain maps to methionine 271–glycine 418. Catalysis depends on for papain-like protease p48 activity residues cysteine 341 and histidine 388. The segment at alanine 453 to glutamate 472 is disordered. The next 6 helical transmembrane spans lie at isoleucine 791–tyrosine 811, tyrosine 823–cysteine 843, alanine 1166–methionine 1186, lysine 1193–tryptophan 1213, phenylalanine 1215–tyrosine 1235, and alanine 1356–proline 1376. The interval phenylalanine 1793–tryptophan 2208 is RNA-directed RNA polymerase. Helical transmembrane passes span valine 2495–valine 2515, leucine 2517–tryptophan 2537, and leucine 2590–phenylalanine 2610. The 146-residue stretch at alanine 2651–lysine 2796 folds into the Helicase ATP-binding domain. Residue alanine 2664–serine 2671 participates in ATP binding. Positions aspartate 2751–histidine 2754 match the DEFH box motif.

It in the C-terminal section; belongs to the DEAD box helicase family. Post-translationally, papain-like protease p48 is autocatalytically processed. The putative RNA-directed RNA polymerase/helicase may be further processed.

The protein localises to the host membrane. The catalysed reaction is RNA(n) + a ribonucleoside 5'-triphosphate = RNA(n+1) + diphosphate. It carries out the reaction ATP + H2O = ADP + phosphate + H(+). Functionally, papain-like protease p48 is a cysteine protease of the peptidase family C8. The sequence is that of ORFB polyprotein from Cryphonectria hypovirus 1 (strain EP713) (CHV-1/EP713).